A 934-amino-acid chain; its full sequence is ATP-dependent RNA helicase dbp-10 (934 aa).

Positions 21 to 43 (LFNNDSDFEDNSSKHHTKKGAVT) are disordered. Positions 99 to 127 (GGFQAMGLNAHLLRAITRKGFSVPTPIQR) match the Q motif motif. The 173-residue stretch at 130–302 (IPLILERKDV…RAGLQEPSLV (173 aa)) folds into the Helicase ATP-binding domain. An ATP-binding site is contributed by 143–150 (ARTGSGKT). The short motif at 250 to 253 (DEAD) is the DEAD box element. Disordered stretches follow at residues 343 to 370 (GPPE…NPKE), 613 to 722 (ELGP…FQDP), and 851 to 934 (GAQP…RQKR). The 155-residue stretch at 359–513 (KRKREYRPNP…KNPSFAADVV (155 aa)) folds into the Helicase C-terminal domain. Composition is skewed to acidic residues over residues 644 to 654 (DEDDEDVDMED) and 662 to 700 (EETN…DSEM). Positions 864–926 (EKAPKDADKF…VAEKKREKNA (63 aa)) are enriched in basic and acidic residues.

Belongs to the DEAD box helicase family. DDX54/DBP10 subfamily.

It is found in the nucleus. Its subcellular location is the nucleolus. The catalysed reaction is ATP + H2O = ADP + phosphate + H(+). ATP-binding RNA helicase involved in the biogenesis of 60S ribosomal subunits and is required for the normal formation of 25S and 5.8S rRNAs. The chain is ATP-dependent RNA helicase dbp-10 (dbp-10) from Neurospora crassa (strain ATCC 24698 / 74-OR23-1A / CBS 708.71 / DSM 1257 / FGSC 987).